A 710-amino-acid polypeptide reads, in one-letter code: Adenylosuccinate synthetase (710 aa).

Positions 1–54 (MPVRRYGGRYNSSSPGVSNALNPSRTAGWPLSPSPATGSKPASTHHDPVPQEAY) are disordered. Polar residues predominate over residues 10 to 25 (YNSSSPGVSNALNPSR). Residues 44 to 54 (THHDPVPQEAY) show a composition bias toward basic and acidic residues. Residues 180-186 (GDEGKGK) and 210-212 (GHT) each bind GTP. The Proton acceptor role is filled by aspartate 181. Mg(2+) is bound by residues aspartate 181 and glycine 210. Residues 181 to 184 (DEGK), 208 to 211 (NAGH), threonine 295, lysine 309, glutamine 421, threonine 437, and lysine 567 each bind IMP. The Proton donor role is filled by histidine 211. 563–569 (AVTKKPR) contacts substrate. GTP contacts are provided by residues arginine 569 and 697–699 (GNG).

The protein belongs to the adenylosuccinate synthetase family. In terms of assembly, homodimer. It depends on Mg(2+) as a cofactor.

The protein localises to the cytoplasm. It catalyses the reaction IMP + L-aspartate + GTP = N(6)-(1,2-dicarboxyethyl)-AMP + GDP + phosphate + 2 H(+). It participates in purine metabolism; AMP biosynthesis via de novo pathway; AMP from IMP: step 1/2. Functionally, plays an important role in the salvage pathway for purine nucleotide biosynthesis. Catalyzes the first committed step in the biosynthesis of AMP from IMP. The sequence is that of Adenylosuccinate synthetase from Leishmania major.